The primary structure comprises 198 residues: MDDTLFQLKFTSKQLERLAKKAEKDSKSEQAKVKKALQQKNVECARVYAENAIRKKNEGLNWLRMASRVDAVASKVQTALTMKGVAKNMTQVTKALDKALSSMDLQKVSAVMDKFETQVQNLDVHTSVMEDSMSSATTLSTPQQQVDDLILQIAEESGLEVEDQLSQLPAGASALGETSARAQEKEDQLSRRLAALRN.

2 coiled-coil regions span residues Gln7–Asn41 and Gly176–Asn198. Residues Gly171–Asn198 form a disordered region. Residues Asp187–Arg197 carry the MIT-interacting motif motif.

The protein belongs to the SNF7 family. Probable peripherally associated component of the endosomal sorting required for transport complex III (ESCRT-III).

The protein localises to the cytoplasm. The protein resides in the endosome membrane. In terms of biological role, probable peripherally associated component of the endosomal sorting required for transport complex III (ESCRT-III) which is involved in multivesicular bodies (MVBs) formation and sorting of endosomal cargo proteins into MVBs. MVBs contain intraluminal vesicles (ILVs) that are generated by invagination and scission from the limiting membrane of the endosome and mostly are delivered to lysosomes enabling degradation of membrane proteins, such as stimulated growth factor receptors, lysosomal enzymes and lipids. The protein is Charged multivesicular body protein 1a (chmp1a) of Danio rerio (Zebrafish).